An 856-amino-acid chain; its full sequence is Facilitated trehalose transporter Tret1 (856 aa).

2 disordered regions span residues 1 to 27 (MSGRDNRGAGGGGGGHQPLSNAMGKLK) and 62 to 202 (DPFL…KATS). The Cytoplasmic portion of the chain corresponds to 1–389 (MSGRDNRGAG…LEVYRPTTNP (389 aa)). Positions 69–80 (VSPQRHPQTVRT) are enriched in polar residues. Positions 133 to 142 (EIREHRDRQQ) are enriched in basic and acidic residues. Over residues 170–180 (GNSNTNNNKAA) the composition is skewed to polar residues. Residues serine 247, serine 248, serine 249, serine 319, and serine 321 each carry the phosphoserine modification. A disordered region spans residues 326 to 345 (LTSRQHFQQQRSISTDSRKS). Over residues 329–340 (RQHFQQQRSIST) the composition is skewed to polar residues. A helical membrane pass occupies residues 390–410 (IFIWTQVLAALSVSLGSLVVG). At 411–439 (FVSAYTSPALVSMTDRNITSFEVTQDAGS) the chain is on the extracellular side. An N-linked (GlcNAc...) asparagine glycan is attached at asparagine 427. Residues 440-460 (WVGGIMPLAGLAGGIAGGPLI) traverse the membrane as a helical segment. Topologically, residues 461-472 (EYLGRRNTILAT) are cytoplasmic. A helical transmembrane segment spans residues 473-493 (AVPFIVSSLLIACAVNVAMVL). The Extracellular segment spans residues 494–496 (CGR). A helical membrane pass occupies residues 497–517 (FLAGFCVGIASLSLPVYLGET). At 518-527 (VQPEVRGTLG) the chain is on the cytoplasmic side. A helical membrane pass occupies residues 528–548 (LLPTAFGNIGILLCFVAGSFM). N-linked (GlcNAc...) asparagine glycosylation occurs at asparagine 549. Residues 549–551 (NWS) are Extracellular-facing. A helical transmembrane segment spans residues 552 to 572 (MLAFLGAALPVPFLILMFLIP). Residues 573-635 (ETPRWFVSRG…ELLKRNNLKP (63 aa)) are Cytoplasmic-facing. Residues 636–656 (LSISLGLMFFQQLSGINAVIF) traverse the membrane as a helical segment. Residues 657–672 (YTVQIFKDAGSTIDGN) are Extracellular-facing. Residues 673–693 (ICTIIVGVVNFLATFIGIVLI) traverse the membrane as a helical segment. Over 694–699 (DRAGRK) the chain is Cytoplasmic. The chain crosses the membrane as a helical span at residues 700–720 (ILLYVSNIAMILTLFVLGGFF). Over 721 to 739 (YCKAHGPDVSNLGWLPLTC) the chain is Extracellular. A helical transmembrane segment spans residues 740 to 760 (FVIYILGFSLGFGPIPWLMMG). Residues 761–766 (EILPAK) lie on the Cytoplasmic side of the membrane. Residues 767–787 (IRGSAASVATAFNWSCTFVVT) traverse the membrane as a helical segment. Residues 788 to 800 (KTFQDLTVAMGAH) are Extracellular-facing. Residues 801–821 (GAFWLFGAICFVGLFFVIIYV) traverse the membrane as a helical segment. Residues 822–856 (PETQGKTLEDIERKMMGRVRRMSSVANIKPLSFNM) lie on the Cytoplasmic side of the membrane. Phosphoserine is present on residues serine 844 and serine 845.

Belongs to the major facilitator superfamily. Sugar transporter (TC 2.A.1.1) family. Trehalose transporter subfamily.

Its subcellular location is the cell membrane. In terms of biological role, low-capacity facilitative transporter for trehalose. Does not transport maltose, sucrose or lactose. Mediates the bidirectional transfer of trehalose. Responsible for the transport of trehalose synthesized in the fat body and the incorporation of trehalose into other tissues that require a carbon source, thereby regulating trehalose levels in the hemolymph. This Drosophila erecta (Fruit fly) protein is Facilitated trehalose transporter Tret1.